Consider the following 687-residue polypeptide: Glycine--tRNA ligase beta subunit (687 aa).

It belongs to the class-II aminoacyl-tRNA synthetase family. Tetramer of two alpha and two beta subunits.

The protein resides in the cytoplasm. It carries out the reaction tRNA(Gly) + glycine + ATP = glycyl-tRNA(Gly) + AMP + diphosphate. The protein is Glycine--tRNA ligase beta subunit of Geobacter sulfurreducens (strain ATCC 51573 / DSM 12127 / PCA).